A 447-amino-acid polypeptide reads, in one-letter code: Neuraminidase (447 aa).

Residues 1–6 (MNPNQK) are Intravirion-facing. Residues 7–27 (IITIGSICMGIGIISLILQIG) traverse the membrane as a helical segment. The involved in apical transport and lipid raft association stretch occupies residues 11–33 (GSICMGIGIISLILQIGNIISMW). The Virion surface portion of the chain corresponds to 28–447 (NIISMWVSHS…GAELPFTIDK (420 aa)). The hypervariable stalk region stretch occupies residues 36–68 (HSIQTENQNHHEACNPSIAGQDAASVALAGNSS). A glycan (N-linked (GlcNAc...) asparagine; by host) is linked at Asn66. Residues 69–447 (LCPISGWAIY…GAELPFTIDK (379 aa)) are head of neuraminidase. 8 disulfides stabilise this stretch: Cys70-Cys395, Cys102-Cys107, Cys162-Cys209, Cys211-Cys216, Cys257-Cys270, Cys259-Cys268, Cys296-Cys313, and Cys399-Cys424. Arg96 contributes to the substrate binding site. An N-linked (GlcNAc...) asparagine; by host glycan is attached at Asn124. Residue Asp129 is the Proton donor/acceptor of the active site. Position 130 (Arg130) interacts with substrate. N-linked (GlcNAc...) asparagine; by host glycosylation is present at Asn213. Residue 255 to 256 (EE) participates in substrate binding. Arg271 provides a ligand contact to substrate. Ca(2+) is bound by residues Asp272, Gly276, and Asp302. Arg346 is a substrate binding site. Catalysis depends on Tyr380, which acts as the Nucleophile.

The protein belongs to the glycosyl hydrolase 34 family. Homotetramer. Ca(2+) serves as cofactor. N-glycosylated.

It localises to the virion membrane. It is found in the host apical cell membrane. It catalyses the reaction Hydrolysis of alpha-(2-&gt;3)-, alpha-(2-&gt;6)-, alpha-(2-&gt;8)- glycosidic linkages of terminal sialic acid residues in oligosaccharides, glycoproteins, glycolipids, colominic acid and synthetic substrates.. With respect to regulation, inhibited by the neuraminidase inhibitors zanamivir (Relenza) and oseltamivir (Tamiflu). These drugs interfere with the release of progeny virus from infected cells and are effective against all influenza strains. Resistance to neuraminidase inhibitors is quite rare. Functionally, catalyzes the removal of terminal sialic acid residues from viral and cellular glycoconjugates. Cleaves off the terminal sialic acids on the glycosylated HA during virus budding to facilitate virus release. Additionally helps virus spread through the circulation by further removing sialic acids from the cell surface. These cleavages prevent self-aggregation and ensure the efficient spread of the progeny virus from cell to cell. Otherwise, infection would be limited to one round of replication. Described as a receptor-destroying enzyme because it cleaves a terminal sialic acid from the cellular receptors. May facilitate viral invasion of the upper airways by cleaving the sialic acid moieties on the mucin of the airway epithelial cells. Likely to plays a role in the budding process through its association with lipid rafts during intracellular transport. May additionally display a raft-association independent effect on budding. Plays a role in the determination of host range restriction on replication and virulence. Sialidase activity in late endosome/lysosome traffic seems to enhance virus replication. This is Neuraminidase from Aves.